Here is a 286-residue protein sequence, read N- to C-terminus: Inositol polyphosphate multikinase alpha (286 aa).

The segment at 1–22 (MQLKVPEHQVAGHIAKDGKPGP) is disordered.

This sequence belongs to the inositol phosphokinase (IPK) family. Post-translationally, phosphorylated. Detected in leaves, stems, roots, siliques and flowers. Highly expressed in root tissues, anthers, the stigma, pollen grains and growing pollen tubes.

The protein resides in the nucleus. It localises to the cell membrane. The enzyme catalyses 1D-myo-inositol 1,4,5-trisphosphate + 2 ATP = 1D-myo-inositol 1,3,4,5,6-pentakisphosphate + 2 ADP + 2 H(+). It carries out the reaction 1D-myo-inositol 1,3,4,6-tetrakisphosphate + ATP = 1D-myo-inositol 1,3,4,5,6-pentakisphosphate + ADP + H(+). Inositol phosphate kinase with a broad substrate specificity. Phosphorylates inositol 1,4,5-trisphosphate (Ins(1,4,5)P3), inositol 1,4,5,6-tetrakisphosphate (Ins(1,4,5,6)P4), inositol 1,3,4,5-tetrakisphosphate (Ins(1,3,4,5)P4), inositol 1,3,4,6-tetrakisphosphate (Ins(1,3,4,6)P4) and inositol 1,2,3,4,6-pentakisphosphate (Ins(1,2,3,4,6)P5) but not inositol 1,4-bisphosphate (Ins(1,4)P2), inositol 1,3,4-trisphosphate (Ins(1,3,4)P3), inositol 1,2,6-trisphosphate (Ins(1,2,6)P3), inositol 3,4,5,6-tetrakisphosphate (Ins(3,4,5,6)P4), inositol 1,3,4,5,6-pentakisphosphate (Ins(1,3,4,5,6)P5), inositol 1,2,4,5,6-pentakisphosphate (Ins(1,2,4,5,6)P5) or inositol hexakisphosphate (InsP6). Regulates pollen and root development probably through the regulation of InsP3-mediated calcium accumulation. This chain is Inositol polyphosphate multikinase alpha (IPK2a), found in Arabidopsis thaliana (Mouse-ear cress).